The following is a 130-amino-acid chain: RxLR effector protein PITG_14783 (130 aa).

The N-terminal stretch at 1-20 is a signal peptide; that stretch reads MRLPYVFAATMATLLVSSNA. Positions 27 to 58 are disordered; it reads AMLSSPNEQHQRQLRSHQTPVEDQEPDEERSL. The RxLR-dEER motif lies at 38-56; the sequence is RQLRSHQTPVEDQEPDEER.

This sequence belongs to the RxLR effector family.

Its subcellular location is the secreted. It is found in the host nucleus. It localises to the host cytoplasm. Its function is as follows. Effector that enhances P.infestans colonization of Nicotiana benthamiana leaves. This Phytophthora infestans (strain T30-4) (Potato late blight agent) protein is RxLR effector protein PITG_14783.